We begin with the raw amino-acid sequence, 447 residues long: N-succinylarginine dihydrolase (447 aa).

Substrate-binding positions include 21–30 (AGLAHGNVAS), Asn-112, and 139–140 (HR). Residue Glu-176 is part of the active site. Arg-215 is a substrate binding site. Residue His-251 is part of the active site. Substrate is bound by residues Asp-253 and Asn-364. The Nucleophile role is filled by Cys-370.

Belongs to the succinylarginine dihydrolase family. Homodimer.

The catalysed reaction is N(2)-succinyl-L-arginine + 2 H2O + 2 H(+) = N(2)-succinyl-L-ornithine + 2 NH4(+) + CO2. It functions in the pathway amino-acid degradation; L-arginine degradation via AST pathway; L-glutamate and succinate from L-arginine: step 2/5. Functionally, catalyzes the hydrolysis of N(2)-succinylarginine into N(2)-succinylornithine, ammonia and CO(2). The chain is N-succinylarginine dihydrolase from Chromohalobacter salexigens (strain ATCC BAA-138 / DSM 3043 / CIP 106854 / NCIMB 13768 / 1H11).